The sequence spans 500 residues: Probable cytosol aminopeptidase (500 aa).

Lys-261 and Asp-266 together coordinate Mn(2+). Lys-273 is an active-site residue. 3 residues coordinate Mn(2+): Asp-284, Asp-343, and Glu-345. The active site involves Arg-347.

This sequence belongs to the peptidase M17 family. It depends on Mn(2+) as a cofactor.

It is found in the cytoplasm. It catalyses the reaction Release of an N-terminal amino acid, Xaa-|-Yaa-, in which Xaa is preferably Leu, but may be other amino acids including Pro although not Arg or Lys, and Yaa may be Pro. Amino acid amides and methyl esters are also readily hydrolyzed, but rates on arylamides are exceedingly low.. It carries out the reaction Release of an N-terminal amino acid, preferentially leucine, but not glutamic or aspartic acids.. Presumably involved in the processing and regular turnover of intracellular proteins. Catalyzes the removal of unsubstituted N-terminal amino acids from various peptides. In Bacillus subtilis (strain 168), this protein is Probable cytosol aminopeptidase (pepA).